Reading from the N-terminus, the 279-residue chain is MRKIKIITDSTAGLTLEEAAKWNIEVLYLTVEIDGKVYNPKTDITPEEFMVRMAETKELPKSSQPAIGSFVEAYEKYTAEGYEILSIHLTEKLSGTVNAARQAADMVEGNITVVDCDYTARGQAFQVLKAAEMAQAGDYSVEEIHAAINDIRDKTKLYIVVVTLDNLIKGGRVGRMQGFLGSLLNIKLIAKLTDGQLEEETKVRSNKKVLQYCLNLIKDEPKKIQQLDVVHANGLNLADDFIAESKEITGLTEIPLFFADPVISTHAGTGAFAFMYYTD.

The region spanning 4–278 (IKIITDSTAG…TGAFAFMYYT (275 aa)) is the DegV domain. 2 residues coordinate hexadecanoate: serine 62 and serine 94.

Functionally, may bind long-chain fatty acids, such as palmitate, and may play a role in lipid transport or fatty acid metabolism. The polypeptide is DegV domain-containing protein lin1977 (Listeria innocua serovar 6a (strain ATCC BAA-680 / CLIP 11262)).